The chain runs to 146 residues: uncharacterized protein (146 aa).

Residues 7 to 146 (LEINYKTDEL…EGHDVLLWKP (140 aa)) form the N-acetyltransferase domain.

This is an uncharacterized protein from Staphylococcus aureus (strain COL).